A 248-amino-acid chain; its full sequence is Thioesterase FSL2 (248 aa).

Active-site charge relay system residues include serine 125, aspartate 195, and histidine 223.

The protein belongs to the LovG family.

Its pathway is secondary metabolite biosynthesis. Its function is as follows. Thioesterase; part of the gene cluster that mediates the biosynthesis of fusarielins F, G and H, decaketide compounds with 5 methylations and a decaline core that act as mycoestrogens as they stimulate growth of MCF-7 breast cancer cells. The initial compound in the pathway is produced by the reducing polyketide synthase FSL1. FSL1 lacks an active enoyl reductase (ER) domain and biosynthesis of fusarielins relies on the trans-acting enoyl reductase FSL5, before it is released through hydrolysis catalyzed by the thioesterase FSL2. Fusarielins F, G, and H have a C11=C12 cis double bond and is fully reduced between C10 and C11 and between C12 and C13. FSL3 can be involved in the formation of the C11=C12 cis double bond by moving a hypothetical C10=C11 or C12=C13 trans double bond to form prefusarielin. Prefusarielin is oxygenated at C15 and C16 by the cytochrome P450 monooxygenase FSL4, resulting in fusarielin F, which subsequently is epoxidized into fusarielin G by the same enzyme. The final step in the pathway is a reduction of the carboxylic acid moiety to yield fusarielin H via a still undetermined mechanism. The sequence is that of Thioesterase FSL2 from Gibberella zeae (strain ATCC MYA-4620 / CBS 123657 / FGSC 9075 / NRRL 31084 / PH-1) (Wheat head blight fungus).